The primary structure comprises 368 residues: MAACTARRALAVGSRWWSRSLTGARWPRPLCAAAGAGAFSPASTTTTRRHLSSRNRPEGKVLETVGVFEVPKQNGKYETGQLFLHSIFGYRGVVLFPWQARLYDRDVASAAPEKAENPAGHGSKEVKGKTHTYYQVLIDARDCPHISQRSQTEAVTFLANHDDSRALYAIPGLDYVSHEDILPYTSTDQVPIQHELFERFLLYDQTKAPPFVARETLRAWQEKNHPWLELSDVHRETTENIRVTVIPFYMGMREAQNSHVYWWRYCIRLENLDSDVVQLRERHWRIFSLSGTLETVRGRGVVGREPVLSKEQPAFQYSSHVSLQASSGHMWGTFRFERPDGSHFDVRIPPFSLESNKDEKTPPSGLHW.

The N-terminal 51 residues, Met1–Leu51, are a transit peptide targeting the mitochondrion. The 126-residue stretch at Arg235 to Lys360 folds into the ApaG domain. Thr292 bears the Phosphothreonine mark.

As to quaternary structure, interacts with PCNA and POLD2. Interacts with SSBP1. Interacts with PRIMPOL; leading to enhance DNA polymerase activity of PRIMPOL. Interacts with POLH. Interacts with POLD1; leading to stimulate DNA polymerase activity of POLD1.

It is found in the mitochondrion matrix. Its subcellular location is the nucleus. Its function is as follows. Involved in DNA damage tolerance by regulating translesion synthesis (TLS) of templates carrying DNA damage lesions such as 8oxoG and abasic sites. May act by stimulating activity of DNA polymerases involved in TLS, such as PRIMPOL and polymerase delta (POLD1). This Homo sapiens (Human) protein is Polymerase delta-interacting protein 2.